We begin with the raw amino-acid sequence, 490 residues long: Cytochrome P450 2C55 (490 aa).

C435 is a heme binding site.

It belongs to the cytochrome P450 family. Requires heme as cofactor. In terms of tissue distribution, highest level in colon. Low levels in liver and small intestine.

Its subcellular location is the endoplasmic reticulum membrane. It localises to the microsome membrane. It carries out the reaction an organic molecule + reduced [NADPH--hemoprotein reductase] + O2 = an alcohol + oxidized [NADPH--hemoprotein reductase] + H2O + H(+). Its function is as follows. Metabolizes arachidonic acid mainly to 19-hydroxyeicosatetraenoic acid (HETE). The polypeptide is Cytochrome P450 2C55 (Mus musculus (Mouse)).